A 391-amino-acid polypeptide reads, in one-letter code: NADH-quinone oxidoreductase subunit D (391 aa).

The protein belongs to the complex I 49 kDa subunit family. NDH-1 is composed of 14 different subunits. Subunits NuoB, C, D, E, F, and G constitute the peripheral sector of the complex.

It localises to the cell inner membrane. It carries out the reaction a quinone + NADH + 5 H(+)(in) = a quinol + NAD(+) + 4 H(+)(out). In terms of biological role, NDH-1 shuttles electrons from NADH, via FMN and iron-sulfur (Fe-S) centers, to quinones in the respiratory chain. The immediate electron acceptor for the enzyme in this species is believed to be ubiquinone. Couples the redox reaction to proton translocation (for every two electrons transferred, four hydrogen ions are translocated across the cytoplasmic membrane), and thus conserves the redox energy in a proton gradient. This Rickettsia massiliae (strain Mtu5) protein is NADH-quinone oxidoreductase subunit D.